Here is a 410-residue protein sequence, read N- to C-terminus: Solute carrier family 52, riboflavin transporter, member 3 (410 aa).

Helical transmembrane passes span 3-23 (ILIYALACAFGLGSWLAINGL), 40-60 (LPSYLTVIIQLANLGPLLVTL), and 73-93 (VVIYTILCIGVLACFLLAFFL). N-linked (GlcNAc...) asparagine glycosylation occurs at Asn-157. 6 consecutive transmembrane segments (helical) span residues 158–178 (FTTEVFFFFLAVMMCISLAAF), 239–259 (FQLTFIYLMVVWVNGTTNGLL), 277–297 (LSAALASVANPVACIVAMFFP), 301–321 (LVFLGLLCVMGTGFASYNMAM), 334–354 (ALGEAIIVLSWVFFTGSLSYV), and 369–389 (ALVWCGAAAQIGSLIGSVIMF).

This sequence belongs to the riboflavin transporter family.

It is found in the cell membrane. It carries out the reaction riboflavin(in) = riboflavin(out). Functionally, plasma membrane transporter mediating the uptake by cells of the water soluble vitamin B2/riboflavin that plays a key role in biochemical oxidation-reduction reactions of the carbohydrate, lipid, and amino acid metabolism. This is Solute carrier family 52, riboflavin transporter, member 3 (slc52a3) from Osmerus mordax (Rainbow smelt).